Here is a 453-residue protein sequence, read N- to C-terminus: Cytochrome b-c1 complex subunit 2, mitochondrial (453 aa).

A mitochondrion-targeting transit peptide spans 1–14 (MKLLSRAGSFSRFY). An N6-acetyllysine mark is found at Lys-66, Lys-199, and Lys-250. Ser-368 is subject to Phosphoserine.

Belongs to the peptidase M16 family. UQCRC2/QCR2 subfamily. In terms of assembly, component of the ubiquinol-cytochrome c oxidoreductase (cytochrome b-c1 complex, complex III, CIII), a multisubunit enzyme composed of 11 subunits. The complex is composed of 3 respiratory subunits cytochrome b, cytochrome c1 and Rieske protein UQCRFS1, 2 core protein subunits UQCRC1/QCR1 and UQCRC2/QCR2, and 6 low-molecular weight protein subunits UQCRH/QCR6, UQCRB/QCR7, UQCRQ/QCR8, UQCR10/QCR9, UQCR11/QCR10 and subunit 9, the cleavage product of Rieske protein UQCRFS1. The complex exists as an obligatory dimer and forms supercomplexes (SCs) in the inner mitochondrial membrane with NADH-ubiquinone oxidoreductase (complex I, CI) and cytochrome c oxidase (complex IV, CIV), resulting in different assemblies (supercomplex SCI(1)III(2)IV(1) and megacomplex MCI(2)III(2)IV(2)). Interacts with RAB5IF. Interacts with STMP1. In terms of processing, acetylation of Lys-159 and Lys-250 is observed in liver mitochondria from fasted mice but not from fed mice. As to expression, expressed in neurons and astrocytes of the cerebral cortex and hippocampus (at protein level).

Its subcellular location is the mitochondrion inner membrane. Its function is as follows. Component of the ubiquinol-cytochrome c oxidoreductase, a multisubunit transmembrane complex that is part of the mitochondrial electron transport chain which drives oxidative phosphorylation. The respiratory chain contains 3 multisubunit complexes succinate dehydrogenase (complex II, CII), ubiquinol-cytochrome c oxidoreductase (cytochrome b-c1 complex, complex III, CIII) and cytochrome c oxidase (complex IV, CIV), that cooperate to transfer electrons derived from NADH and succinate to molecular oxygen, creating an electrochemical gradient over the inner membrane that drives transmembrane transport and the ATP synthase. The cytochrome b-c1 complex catalyzes electron transfer from ubiquinol to cytochrome c, linking this redox reaction to translocation of protons across the mitochondrial inner membrane, with protons being carried across the membrane as hydrogens on the quinol. In the process called Q cycle, 2 protons are consumed from the matrix, 4 protons are released into the intermembrane space and 2 electrons are passed to cytochrome c. The 2 core subunits UQCRC1/QCR1 and UQCRC2/QCR2 are homologous to the 2 mitochondrial-processing peptidase (MPP) subunits beta-MPP and alpha-MPP respectively, and they seem to have preserved their MPP processing properties. May be involved in the in situ processing of UQCRFS1 into the mature Rieske protein and its mitochondrial targeting sequence (MTS)/subunit 9 when incorporated into complex III. This Mus musculus (Mouse) protein is Cytochrome b-c1 complex subunit 2, mitochondrial (Uqcrc2).